Reading from the N-terminus, the 83-residue chain is Vitellogenesis-inhibiting hormone (83 aa).

Disulfide bonds link cysteine 15–cysteine 52, cysteine 32–cysteine 48, and cysteine 35–cysteine 61.

In terms of tissue distribution, found in the sinus glands of both male and female. Found also in the brain; the neuroendocrine structures of the protocerebrum.

The protein localises to the secreted. In terms of biological role, inhibits secondary vitellogenesis in females. Has no hyperglycemic or molt-inhibiting activity. This is Vitellogenesis-inhibiting hormone from Armadillidium vulgare (Pillbug).